Consider the following 287-residue polypeptide: HTH-type transcriptional regulator MurR (287 aa).

The HTH rpiR-type domain occupies 1-77; sequence MLYLAKMRNA…MALIEEHSVS (77 aa). The H-T-H motif DNA-binding region spans 37-56; sequence SRNMAKQLEISQSSIVKFAQ. Positions 128–268 constitute an SIS domain; that stretch reads VINLISKAPL…FVGMVQLNDV (141 aa).

Homotetramer.

The protein operates within amino-sugar metabolism; N-acetylmuramate degradation [regulation]. Represses the expression of the murPQ operon involved in the uptake and degradation of N-acetylmuramic acid (MurNAc). Binds to two adjacent inverted repeats within the operator region. MurNAc 6-phosphate, the substrate of MurQ, is the specific inducer that weakens binding of MurR to the operator. The polypeptide is HTH-type transcriptional regulator MurR (Salmonella arizonae (strain ATCC BAA-731 / CDC346-86 / RSK2980)).